The chain runs to 381 residues: Putative MgpC-like protein MPN_503 (381 aa).

The tract at residues 1-109 is disordered; the sequence is MNGVAQDKVH…TDSQQSGHNS (109 aa). The segment covering 13 to 31 has biased composition (polar residues); that stretch reads EQTTQWNQQASQKNLTNNP. 2 stretches are compositionally biased toward basic and acidic residues: residues 40-51 and 61-73; these read KLDKGRAYRKLN and DSTK…DKDG. Positions 89 to 109 are enriched in polar residues; it reads VSSTESQMAAVTDSQQSGHNS.

It belongs to the MgpC family.

In Mycoplasma pneumoniae (strain ATCC 29342 / M129 / Subtype 1) (Mycoplasmoides pneumoniae), this protein is Putative MgpC-like protein MPN_503.